Consider the following 169-residue polypeptide: Putative outer membrane protein BBA03 (169 aa).

It localises to the cell outer membrane. The polypeptide is Putative outer membrane protein BBA03 (Borreliella burgdorferi (strain ATCC 35210 / DSM 4680 / CIP 102532 / B31) (Borrelia burgdorferi)).